The sequence spans 477 residues: 3-isopropylmalate dehydratase large subunit (477 aa).

Positions 351, 411, and 414 each coordinate [4Fe-4S] cluster.

The protein belongs to the aconitase/IPM isomerase family. LeuC type 1 subfamily. Heterodimer of LeuC and LeuD. Requires [4Fe-4S] cluster as cofactor.

It catalyses the reaction (2R,3S)-3-isopropylmalate = (2S)-2-isopropylmalate. The protein operates within amino-acid biosynthesis; L-leucine biosynthesis; L-leucine from 3-methyl-2-oxobutanoate: step 2/4. In terms of biological role, catalyzes the isomerization between 2-isopropylmalate and 3-isopropylmalate, via the formation of 2-isopropylmaleate. The chain is 3-isopropylmalate dehydratase large subunit from Kineococcus radiotolerans (strain ATCC BAA-149 / DSM 14245 / SRS30216).